Consider the following 202-residue polypeptide: Heart- and neural crest derivatives-expressed protein 1 (202 aa).

Residues 83–135 (RKGVGGPKKERRRTESINSAFAELRECIPNVPADTKLSKIKTLRLATSYIAYL) form the bHLH domain. The tract at residues 143-187 (SQPGEPEGFKAELKKADGRENKRKRETQPEVYSQPLAHGEKKLKG) is disordered. The span at 149 to 162 (EGFKAELKKADGRE) shows a compositional bias: basic and acidic residues.

Efficient DNA binding requires dimerization with another bHLH protein.

It localises to the nucleus. The protein resides in the nucleoplasm. Its subcellular location is the nucleolus. Functionally, transcription factor. Plays an essential role in cardiac morphogenesis. This chain is Heart- and neural crest derivatives-expressed protein 1 (HAND1), found in Gallus gallus (Chicken).